The sequence spans 78 residues: Cell division topological specificity factor (78 aa).

The protein belongs to the MinE family.

Prevents the cell division inhibition by proteins MinC and MinD at internal division sites while permitting inhibition at polar sites. This ensures cell division at the proper site by restricting the formation of a division septum at the midpoint of the long axis of the cell. In Helicobacter hepaticus (strain ATCC 51449 / 3B1), this protein is Cell division topological specificity factor.